We begin with the raw amino-acid sequence, 575 residues long: Estrogen receptor beta (575 aa).

Residues 1–160 (MSSSLSPTLQ…GAVVKRDMHF (160 aa)) form a modulating region. The interval 108–151 (DTKPHTSGRHSSFLSRPKLFGKRPEDGDGDEALDDDDPSSSSSG) is disordered. Residues 134–145 (GDGDEALDDDDP) show a composition bias toward acidic residues. NR C4-type zinc fingers lie at residues 161–181 (CVVCHDYASGYHYGVWSCEGC) and 197–221 (CPATNQCTIDKNRRKSCQACRLRKC). Positions 161-226 (CVVCHDYASG…RLRKCYEMGM (66 aa)) form a DNA-binding region, nuclear receptor. Residues 290–526 (SPEQLVYCIL…DLLLEMLDAN (237 aa)) enclose the NR LBD domain. Positions 537 to 549 (VCTDPVTPATSPN) are enriched in polar residues. The disordered stretch occupies residues 537-557 (VCTDPVTPATSPNTPLPPQLH).

The protein belongs to the nuclear hormone receptor family. NR3 subfamily. Binds DNA as a homodimer. Can form a heterodimer with ER-alpha. As to expression, ovary and testis.

The protein resides in the nucleus. Binds estrogens with an affinity similar to that of ER-alpha, and activates expression of reporter genes containing estrogen response elements (ERE) in an estrogen-dependent manner. This chain is Estrogen receptor beta (esr2), found in Ictalurus punctatus (Channel catfish).